The chain runs to 711 residues: Ribosomal RNA large subunit methyltransferase K/L (711 aa).

One can recognise a THUMP domain in the interval 43-154; that stretch reads TLYRTLLWSR…RENLVISLDL (112 aa).

The protein belongs to the methyltransferase superfamily. RlmKL family.

The protein localises to the cytoplasm. The catalysed reaction is guanosine(2445) in 23S rRNA + S-adenosyl-L-methionine = N(2)-methylguanosine(2445) in 23S rRNA + S-adenosyl-L-homocysteine + H(+). The enzyme catalyses guanosine(2069) in 23S rRNA + S-adenosyl-L-methionine = N(2)-methylguanosine(2069) in 23S rRNA + S-adenosyl-L-homocysteine + H(+). Specifically methylates the guanine in position 2445 (m2G2445) and the guanine in position 2069 (m7G2069) of 23S rRNA. The sequence is that of Ribosomal RNA large subunit methyltransferase K/L from Haemophilus influenzae (strain PittGG).